The sequence spans 228 residues: 2-C-methyl-D-erythritol 4-phosphate cytidylyltransferase (228 aa).

It belongs to the IspD/TarI cytidylyltransferase family. IspD subfamily.

The catalysed reaction is 2-C-methyl-D-erythritol 4-phosphate + CTP + H(+) = 4-CDP-2-C-methyl-D-erythritol + diphosphate. It participates in isoprenoid biosynthesis; isopentenyl diphosphate biosynthesis via DXP pathway; isopentenyl diphosphate from 1-deoxy-D-xylulose 5-phosphate: step 2/6. In terms of biological role, catalyzes the formation of 4-diphosphocytidyl-2-C-methyl-D-erythritol from CTP and 2-C-methyl-D-erythritol 4-phosphate (MEP). This chain is 2-C-methyl-D-erythritol 4-phosphate cytidylyltransferase, found in Geobacillus kaustophilus (strain HTA426).